A 72-amino-acid chain; its full sequence is Cytochrome c oxidase copper chaperone 2 (72 aa).

Residues Cys32 and Cys33 each coordinate Cu cation. The CHCH domain maps to 32-72 (CCACPDTKKLRDECIVEHGESACTKWIEAHILCLRSEGFKV). 2 consecutive short sequence motifs (cx9C motif) follow at residues 35–45 (CPDTKKLRDEC) and 54–64 (CTKWIEAHILC). Disulfide bonds link Cys35-Cys64 and Cys45-Cys54.

This sequence belongs to the COX17 family.

It is found in the mitochondrion intermembrane space. Functionally, copper chaperone for cytochrome c oxidase (COX). Binds 2 copper ions and delivers them to the Cu(A) site of COX. The chain is Cytochrome c oxidase copper chaperone 2 (COX17-2) from Arabidopsis thaliana (Mouse-ear cress).